A 458-amino-acid chain; its full sequence is Tetracycline resistance protein (458 aa).

The next 12 helical transmembrane spans lie at 12 to 33 (HNQVLIWLCVLSFFSVLNEMVL), 81 to 100 (LLLFGIMVNGLGSIIGFVGH), 111 to 129 (FIQGIGAAAFPALVMVVVA), 140 to 162 (AFGLIGSLVAMGEGVGPAIGGMV), 165 to 185 (YIHWSYLLLIPTATIITVPFL), 201 to 221 (MAGIILMSAGIVFFMLFTTSY), 223 to 240 (FSFLIISILAFFIFVQHI), 256 to 276 (VFFVIGTLCGGLIFGTVAGFV), 297 to 317 (GIIFPGTMSVIIFGYIGGLLV), 324 to 344 (YVLTIGSALLSSGFLIAAFFI), 346 to 365 (AAPWIMTIIVIFVFGGLSFT), and 432 to 451 (MLILFAGIIVICWLVILNVY).

This sequence belongs to the major facilitator superfamily. TCR/Tet family.

It is found in the cell membrane. Functionally, resistance to tetracycline by an active tetracycline efflux. This is an energy-dependent process that decreases the accumulation of the antibiotic in whole cells. This protein functions as a metal-tetracycline/H(+) antiporter. This Bacillus subtilis (strain 168) protein is Tetracycline resistance protein (tetB).